We begin with the raw amino-acid sequence, 397 residues long: ATP-dependent RNA helicase RhlB (397 aa).

Positions 8–36 (TRFHDFNLAPELMHAIQDLGFPYCTPIQA) match the Q motif motif. The 181-residue stretch at 39-219 (LGFTLKGKDA…KQWTTDPSIV (181 aa)) folds into the Helicase ATP-binding domain. Position 52–59 (52–59 (AQTGTGKT)) interacts with ATP. Residues 165–168 (DEAD) carry the DEAD box motif. The region spanning 242–392 (DKYKLLYNLV…TPPTHLLRAV (151 aa)) is the Helicase C-terminal domain.

It belongs to the DEAD box helicase family. RhlB subfamily. In terms of assembly, component of the RNA degradosome, which is a multiprotein complex involved in RNA processing and mRNA degradation.

The protein resides in the cytoplasm. The enzyme catalyses ATP + H2O = ADP + phosphate + H(+). In terms of biological role, DEAD-box RNA helicase involved in RNA degradation. Has RNA-dependent ATPase activity and unwinds double-stranded RNA. The chain is ATP-dependent RNA helicase RhlB from Pseudomonas syringae pv. tomato (strain ATCC BAA-871 / DC3000).